The sequence spans 863 residues: MRVMGIRMNYQHLWKWGIMLLGILMTCSVAEDLWVTVYYGVPVWKEATTTLFCASDAKSYEPEAHNIWATHACVPTDPNPREIEMENVTENFNMWKNNMVEQMHEDIISLWDQNLKPCVKLTPLCVTLNCTNAGGNKTTNGNNTTNQEEQMMEKGEMKNCSFNITTVISDKKKQVHALFYRLDVVPIDDDNSANTSNTNYTNYRLINCNTSAITQACPKVTFEPIPIHYCAPAGFAILKCKDKKFNGTGPCKKVSTVQCTHGIRPVVSTQLLLNGSLAEEEIIIRSENLTNNVKTIIVHLNESVEINCTRPDNKITRQSTPIGLGQALYTTRIKGDIRQAYCNISAAAWNKTLQQVAKKLGDLLNQTTIIFKPPAGGDPEITTHSFNCGGEFFYCNTSRLFNSTWNSSTWNNDTLNSEGTIKLPCRIKQIINMWQGVGKAMYAPPIEGLIKCTSNITGLLLTRDGGVNNSTNETFRPGGGDMKDNWRNELYKYKVVRIEPLGIAPTRAKRRVVEREKRAIGLGAVFLGFLGAAGSTMGAVSVALTGQARQLLSGIVQQQNNLLRAIEAQQHMLQLTVWGIKQLQARVLAVESYLKDQQLLGIWGCSGKHICTTTVPWNSSWSNKSLEEIWNNMTWIEWEREIDNYTGVIYSLIENSQIQQEKNEQDLLQLDKWASLWNWFSITKWLWYIKIFIMIVGGLIGLRIVFTVLSLVNRVRQGYSPLSFQTLLPAPRGPDRPEGIEEEGGEQGRDRSIRLVNGFSALFWDDLRNLCLFSYHRLRDLILIATRIVELLGRRGWEAIKYLWSLLQYWTQELKNSFISLLNATAIAVAEGTDRIIELIRRAFRAVLHIPRRVRQGLERALL.

A signal peptide spans 1 to 31 (MRVMGIRMNYQHLWKWGIMLLGILMTCSVAE). The Extracellular segment spans residues 32-691 (DLWVTVYYGV…ITKWLWYIKI (660 aa)). The cysteines at positions 53 and 73 are disulfide-linked. Asn87, Asn129, Asn136, Asn142, Asn143, Asn159, Asn163, Asn194, Asn199, Asn209, Asn246, Asn274, Asn288, Asn301, and Asn307 each carry an N-linked (GlcNAc...) asparagine; by host glycan. 5 disulfides stabilise this stretch: Cys118-Cys217, Cys125-Cys208, Cys130-Cys160, Cys230-Cys259, and Cys240-Cys251. Residues 130-159 (CTNAGGNKTTNGNNTTNQEEQMMEKGEMKN) are V1. The V2 stretch occupies residues 160 to 208 (CSFNITTVISDKKKQVHALFYRLDVVPIDDDNSANTSNTNYTNYRLINC). The interval 308–341 (CTRPDNKITRQSTPIGLGQALYTTRIKGDIRQAY) is V3. A disulfide bridge links Cys308 with Cys342. Residues Asn343, Asn350, and Asn365 are each glycosylated (N-linked (GlcNAc...) asparagine; by host). The tract at residues 374–384 (PAGGDPEITTH) is CD4-binding loop. 2 disulfides stabilise this stretch: Cys388–Cys452 and Cys395–Cys425. The segment at 395–425 (CNTSRLFNSTWNSSTWNNDTLNSEGTIKLPC) is V4. N-linked (GlcNAc...) asparagine; by host glycans are attached at residues Asn396, Asn402, Asn406, Asn412, Asn455, Asn468, Asn469, and Asn472. V5 stretches follow at residues 467–478 (VNNSTNETFRPG) and 470–478 (STNETFRPG). A fusion peptide region spans residues 519–539 (AIGLGAVFLGFLGAAGSTMGA). Positions 581 to 599 (KQLQARVLAVESYLKDQQL) are immunosuppression. An intrachain disulfide couples Cys605 to Cys611. N-linked (GlcNAc...) asparagine; by host glycosylation is found at Asn618, Asn623, Asn632, and Asn644. The stretch at 640–674 (REIDNYTGVIYSLIENSQIQQEKNEQDLLQLDKWA) forms a coiled coil. Residues 669–690 (QLDKWASLWNWFSITKWLWYIK) are MPER; binding to GalCer. The helical transmembrane segment at 692 to 712 (FIMIVGGLIGLRIVFTVLSLV) threads the bilayer. At 713–863 (NRVRQGYSPL…VRQGLERALL (151 aa)) the chain is on the cytoplasmic side. The YXXL motif; contains endocytosis signal motif lies at 719-722 (YSPL). Residues 729–748 (PAPRGPDRPEGIEEEGGEQG) are disordered. A lipid anchor (S-palmitoyl cysteine; by host) is attached at Cys771. Positions 862 to 863 (LL) match the Di-leucine internalization motif motif.

This sequence belongs to the HIV-1 env protein family. As to quaternary structure, the mature envelope protein (Env) consists of a homotrimer of non-covalently associated gp120-gp41 heterodimers. The resulting complex protrudes from the virus surface as a spike. There seems to be as few as 10 spikes on the average virion. Interacts with host CD4, CCR5 and CXCR4. Gp120 also interacts with the C-type lectins CD209/DC-SIGN and CLEC4M/DC-SIGNR (collectively referred to as DC-SIGN(R)). Gp120 and gp41 interact with GalCer. Gp120 interacts with host ITGA4/ITGB7 complex; on CD4+ T-cells, this interaction results in rapid activation of integrin ITGAL/LFA-1, which facilitates efficient cell-to-cell spreading of HIV-1. Gp120 interacts with cell-associated heparan sulfate; this interaction increases virus infectivity on permissive cells and may be involved in infection of CD4- cells. The mature envelope protein (Env) consists of a homotrimer of non-covalently associated gp120-gp41 heterodimers. The resulting complex protrudes from the virus surface as a spike. There seems to be as few as 10 spikes on the average virion. Post-translationally, highly glycosylated by host. The high number of glycan on the protein is reffered to as 'glycan shield' because it contributes to hide protein sequence from adaptive immune system. Palmitoylation of the transmembrane protein and of Env polyprotein (prior to its proteolytic cleavage) is essential for their association with host cell membrane lipid rafts. Palmitoylation is therefore required for envelope trafficking to classical lipid rafts, but not for viral replication. In terms of processing, specific enzymatic cleavages in vivo yield mature proteins. Envelope glycoproteins are synthesized as an inactive precursor that is heavily N-glycosylated and processed likely by host cell furin in the Golgi to yield the mature SU and TM proteins. The cleavage site between SU and TM requires the minimal sequence [KR]-X-[KR]-R. About 2 of the 9 disulfide bonds of gp41 are reduced by P4HB/PDI, following binding to CD4 receptor.

It is found in the virion membrane. It localises to the host cell membrane. The protein resides in the host endosome membrane. In terms of biological role, oligomerizes in the host endoplasmic reticulum into predominantly trimers. In a second time, gp160 transits in the host Golgi, where glycosylation is completed. The precursor is then proteolytically cleaved in the trans-Golgi and thereby activated by cellular furin or furin-like proteases to produce gp120 and gp41. Its function is as follows. Attaches the virus to the host lymphoid cell by binding to the primary receptor CD4. This interaction induces a structural rearrangement creating a high affinity binding site for a chemokine coreceptor like CXCR4 and/or CCR5. Acts as a ligand for CD209/DC-SIGN and CLEC4M/DC-SIGNR, which are respectively found on dendritic cells (DCs), and on endothelial cells of liver sinusoids and lymph node sinuses. These interactions allow capture of viral particles at mucosal surfaces by these cells and subsequent transmission to permissive cells. HIV subverts the migration properties of dendritic cells to gain access to CD4+ T-cells in lymph nodes. Virus transmission to permissive T-cells occurs either in trans (without DCs infection, through viral capture and transmission), or in cis (following DCs productive infection, through the usual CD4-gp120 interaction), thereby inducing a robust infection. In trans infection, bound virions remain infectious over days and it is proposed that they are not degraded, but protected in non-lysosomal acidic organelles within the DCs close to the cell membrane thus contributing to the viral infectious potential during DCs' migration from the periphery to the lymphoid tissues. On arrival at lymphoid tissues, intact virions recycle back to DCs' cell surface allowing virus transmission to CD4+ T-cells. Acts as a class I viral fusion protein. Under the current model, the protein has at least 3 conformational states: pre-fusion native state, pre-hairpin intermediate state, and post-fusion hairpin state. During fusion of viral and target intracellular membranes, the coiled coil regions (heptad repeats) assume a trimer-of-hairpins structure, positioning the fusion peptide in close proximity to the C-terminal region of the ectodomain. The formation of this structure appears to drive apposition and subsequent fusion of viral and target cell membranes. Complete fusion occurs in host cell endosomes and is dynamin-dependent, however some lipid transfer might occur at the plasma membrane. The virus undergoes clathrin-dependent internalization long before endosomal fusion, thus minimizing the surface exposure of conserved viral epitopes during fusion and reducing the efficacy of inhibitors targeting these epitopes. Membranes fusion leads to delivery of the nucleocapsid into the cytoplasm. The sequence is that of Envelope glycoprotein gp160 from Human immunodeficiency virus type 1 group M subtype D (isolate Z84) (HIV-1).